Consider the following 985-residue polypeptide: DNA polymerase (985 aa).

Residues 936-972 form a disordered region; sequence APSASDASGKRARKGAAPSDDESGSSEDEDAPCEPKC. The span at 954–967 shows a compositional bias: acidic residues; that stretch reads SDDESGSSEDEDAP.

Belongs to the DNA polymerase type-B family.

It carries out the reaction DNA(n) + a 2'-deoxyribonucleoside 5'-triphosphate = DNA(n+1) + diphosphate. Its function is as follows. Replicates the viral genome, host DNA polymerases cannot substitute for the viral enzyme in this process. The sequence is that of DNA polymerase (POL) from Orgyia pseudotsugata (Douglas-fir tussock moth).